The chain runs to 172 residues: Cystatin-like cysteine protease inhibitor EPIC4 (172 aa).

The signal sequence occupies residues 1-17 (MRASLSILVAFPALAAA). The short motif at 71–75 (QVVAG) is the Secondary area of contact element. Positions 129-172 (EAATASSSSTPAPTPASTSTSASSSEETMLQSSVQQRAMFSDFV) are disordered. The segment covering 130 to 156 (AATASSSSTPAPTPASTSTSASSSEET) has biased composition (low complexity). Positions 157–166 (MLQSSVQQRA) are enriched in polar residues.

Belongs to the cystatin family.

The protein localises to the secreted. In terms of biological role, secreted effector that interacts with and inhibits host apoplastic pathogenesis-related papain-like cysteine proteases. Inhibition of host proteases by a pathogen extracellular protease inhibitor forms a specific type of defense-counterdefense mechanism between plants and microbial pathogens. In Phytophthora infestans (Potato late blight agent), this protein is Cystatin-like cysteine protease inhibitor EPIC4.